The following is a 245-amino-acid chain: Carboxy-S-adenosyl-L-methionine synthase (245 aa).

S-adenosyl-L-methionine contacts are provided by residues Y42, 67-69, 92-93, 120-121, N135, and R202; these read GCS, DN, and DI.

It belongs to the class I-like SAM-binding methyltransferase superfamily. Cx-SAM synthase family. As to quaternary structure, homodimer.

It carries out the reaction prephenate + S-adenosyl-L-methionine = carboxy-S-adenosyl-L-methionine + 3-phenylpyruvate + H2O. Catalyzes the conversion of S-adenosyl-L-methionine (SAM) to carboxy-S-adenosyl-L-methionine (Cx-SAM). The chain is Carboxy-S-adenosyl-L-methionine synthase from Vibrio vulnificus (strain CMCP6).